The chain runs to 161 residues: Cytochrome c-type biogenesis protein CcmE (161 aa).

At 1–13 the chain is on the cytoplasmic side; the sequence is MSWLPKSPKARRR. The helical; Signal-anchor for type II membrane protein transmembrane segment at 14–34 threads the bilayer; the sequence is LMLVAAIAPVLAVAAGLTLWG. Residues 35-161 are Periplasmic-facing; it reads LSDSISFFYT…QRPEHQGDAL (127 aa). His128 and Tyr132 together coordinate heme.

Belongs to the CcmE/CycJ family.

It localises to the cell inner membrane. In terms of biological role, heme chaperone required for the biogenesis of c-type cytochromes. Transiently binds heme delivered by CcmC and transfers the heme to apo-cytochromes in a process facilitated by CcmF and CcmH. In Phenylobacterium zucineum (strain HLK1), this protein is Cytochrome c-type biogenesis protein CcmE.